A 274-amino-acid polypeptide reads, in one-letter code: Large ribosomal subunit protein uL2 (274 aa).

Residues 200–274 (HALEKSGKAG…SKYIIERRKK (75 aa)) are disordered. 2 stretches are compositionally biased toward basic residues: residues 207–220 (KAGR…RPRN) and 255–274 (LKTR…RRKK).

It belongs to the universal ribosomal protein uL2 family. As to quaternary structure, part of the 50S ribosomal subunit. Forms a bridge to the 30S subunit in the 70S ribosome.

One of the primary rRNA binding proteins. Required for association of the 30S and 50S subunits to form the 70S ribosome, for tRNA binding and peptide bond formation. It has been suggested to have peptidyltransferase activity; this is somewhat controversial. Makes several contacts with the 16S rRNA in the 70S ribosome. This Parabacteroides distasonis (strain ATCC 8503 / DSM 20701 / CIP 104284 / JCM 5825 / NCTC 11152) protein is Large ribosomal subunit protein uL2.